We begin with the raw amino-acid sequence, 838 residues long: Probable beta-glucosidase I (838 aa).

N-linked (GlcNAc...) asparagine glycans are attached at residues Asn-57 and Asn-197. Asp-225 is a catalytic residue. The 161-residue stretch at 395 to 555 (EGEKGFKFRV…GQEELISKAA (161 aa)) folds into the PA14 domain. Asn-493 carries N-linked (GlcNAc...) asparagine glycosylation.

This sequence belongs to the glycosyl hydrolase 3 family.

It is found in the secreted. The enzyme catalyses Hydrolysis of terminal, non-reducing beta-D-glucosyl residues with release of beta-D-glucose.. It participates in glycan metabolism; cellulose degradation. Functionally, beta-glucosidases are one of a number of cellulolytic enzymes involved in the degradation of cellulosic biomass. Catalyzes the last step releasing glucose from the inhibitory cellobiose. The chain is Probable beta-glucosidase I (bglI) from Aspergillus clavatus (strain ATCC 1007 / CBS 513.65 / DSM 816 / NCTC 3887 / NRRL 1 / QM 1276 / 107).